Consider the following 983-residue polypeptide: Protein translocase subunit SecA (983 aa).

ATP-binding positions include Q83, 101 to 105, and D489; that span reads GEGKT. Residues 948-983 form a disordered region; it reads ISSEEEDNNEKTNINNNEDLERTKGEAQQTAKNPNE. Residues 973 to 983 are compositionally biased toward polar residues; sequence EAQQTAKNPNE.

Belongs to the SecA family. As to quaternary structure, monomer and homodimer. Part of the essential Sec protein translocation apparatus which comprises SecA, SecYEG and auxiliary proteins SecDF. Other proteins may also be involved.

It is found in the cell membrane. It localises to the cytoplasm. It carries out the reaction ATP + H2O + cellular proteinSide 1 = ADP + phosphate + cellular proteinSide 2.. In terms of biological role, part of the Sec protein translocase complex. Interacts with the SecYEG preprotein conducting channel. Has a central role in coupling the hydrolysis of ATP to the transfer of proteins into and across the cell membrane, serving as an ATP-driven molecular motor driving the stepwise translocation of polypeptide chains across the membrane. The polypeptide is Protein translocase subunit SecA (Mesomycoplasma hyopneumoniae (strain 232) (Mycoplasma hyopneumoniae)).